The sequence spans 236 residues: MKKKLYEGSSKILYSAEEDFLLIMAFSDKAILETGKTVDISGKGVLNNNISSFLMDKLEMIGIANHFIEKINMREQLIQYVEVFPIQVIISSVACGRFVKEFGLDEGYVFDKPIMDFKVRSREFKYPIVNEYQILNFGWLTRDEITAVKEQALHIYDFLSGLFIGVGIRLVECKLEFGRVFNGEESIIMLTDEISPDNCRLWHINSNEKLGFELLENEPSKVFESYQLIAERLKEK.

Belongs to the SAICAR synthetase family.

It catalyses the reaction 5-amino-1-(5-phospho-D-ribosyl)imidazole-4-carboxylate + L-aspartate + ATP = (2S)-2-[5-amino-1-(5-phospho-beta-D-ribosyl)imidazole-4-carboxamido]succinate + ADP + phosphate + 2 H(+). It participates in purine metabolism; IMP biosynthesis via de novo pathway; 5-amino-1-(5-phospho-D-ribosyl)imidazole-4-carboxamide from 5-amino-1-(5-phospho-D-ribosyl)imidazole-4-carboxylate: step 1/2. This is Phosphoribosylaminoimidazole-succinocarboxamide synthase from Rickettsia canadensis (strain McKiel).